Here is a 126-residue protein sequence, read N- to C-terminus: Profilin-1 (126 aa).

This sequence belongs to the profilin family. As to quaternary structure, occurs in many kinds of cells as a complex with monomeric actin in a 1:1 ratio.

It is found in the cytoplasm. Its subcellular location is the cytoskeleton. Functionally, binds to actin and affects the structure of the cytoskeleton. At high concentrations, profilin prevents the polymerization of actin, whereas it enhances it at low concentrations. By binding to PIP2, it inhibits the formation of IP3 and DG. This chain is Profilin-1 (proA), found in Dictyostelium discoideum (Social amoeba).